Here is a 372-residue protein sequence, read N- to C-terminus: Chaperone protein DnaJ (372 aa).

The region spanning 5–70 (DFYEVLGVTK…QKRAAYDRYG (66 aa)) is the J domain. Residues 129–207 (GKLASLTLPT…CGGAGRVTRE (79 aa)) form a CR-type zinc finger. 8 residues coordinate Zn(2+): Cys-142, Cys-145, Cys-159, Cys-162, Cys-181, Cys-184, Cys-195, and Cys-198. CXXCXGXG motif repeat units follow at residues 142–149 (CEACDGTG), 159–166 (CPTCGGQG), 181–188 (CPQCHGRG), and 195–202 (CQACGGAG).

This sequence belongs to the DnaJ family. Homodimer. Zn(2+) serves as cofactor.

The protein localises to the cytoplasm. Functionally, participates actively in the response to hyperosmotic and heat shock by preventing the aggregation of stress-denatured proteins and by disaggregating proteins, also in an autonomous, DnaK-independent fashion. Unfolded proteins bind initially to DnaJ; upon interaction with the DnaJ-bound protein, DnaK hydrolyzes its bound ATP, resulting in the formation of a stable complex. GrpE releases ADP from DnaK; ATP binding to DnaK triggers the release of the substrate protein, thus completing the reaction cycle. Several rounds of ATP-dependent interactions between DnaJ, DnaK and GrpE are required for fully efficient folding. Also involved, together with DnaK and GrpE, in the DNA replication of plasmids through activation of initiation proteins. The polypeptide is Chaperone protein DnaJ (Beijerinckia indica subsp. indica (strain ATCC 9039 / DSM 1715 / NCIMB 8712)).